A 194-amino-acid chain; its full sequence is Large ribosomal subunit protein uL10 (194 aa).

Residues 172–187 are compositionally biased toward low complexity; sequence EGGAAEAPAEAATEAP. Positions 172–194 are disordered; it reads EGGAAEAPAEAATEAPAEAEAES.

It belongs to the universal ribosomal protein uL10 family. As to quaternary structure, part of the ribosomal stalk of the 50S ribosomal subunit. The N-terminus interacts with L11 and the large rRNA to form the base of the stalk. The C-terminus forms an elongated spine to which L12 dimers bind in a sequential fashion forming a multimeric L10(L12)X complex.

Functionally, forms part of the ribosomal stalk, playing a central role in the interaction of the ribosome with GTP-bound translation factors. The protein is Large ribosomal subunit protein uL10 of Rhodococcus erythropolis (strain PR4 / NBRC 100887).